The chain runs to 477 residues: UDP-N-acetylmuramate--L-alanine ligase (477 aa).

120–126 is an ATP binding site; it reads GSHGKTT.

The protein belongs to the MurCDEF family.

The protein resides in the cytoplasm. It carries out the reaction UDP-N-acetyl-alpha-D-muramate + L-alanine + ATP = UDP-N-acetyl-alpha-D-muramoyl-L-alanine + ADP + phosphate + H(+). It participates in cell wall biogenesis; peptidoglycan biosynthesis. Functionally, cell wall formation. The protein is UDP-N-acetylmuramate--L-alanine ligase of Rickettsia canadensis (strain McKiel).